We begin with the raw amino-acid sequence, 360 residues long: Protein phosphatase 1 regulatory subunit 7 (360 aa).

Positions 1–63 are disordered; that stretch reads MAAERGAGQQ…RGAEDPEEEH (63 aa). Ala-2 carries the post-translational modification N-acetylalanine. Residues Ser-12, Ser-24, Ser-27, Ser-44, and Ser-47 each carry the phosphoserine modification. Basic and acidic residues predominate over residues 17–34; it reads EVDRRVESEESGDEEGKK. LRR repeat units follow at residues 77-98, 99-120, 121-142, 143-164, 165-186, 187-208, 209-230, 231-252, 253-274, 275-296, and 297-318; these read DAED…EVLK, KVKS…DELQ, SLRE…EALT, ELEV…DKLT, QLKK…STLQ, QLQM…DTLT, NLES…DALS, NLTV…QNLV, NLRE…ENNN, KLTM…SHLT, and ELQE…DELK. Phosphoserine is present on Ser-322. The LRRCT domain maps to 331–360; the sequence is NPLQKDPQYRRKVMLALPSVRQIDATFVRF.

The protein belongs to the SDS22 family. As to quaternary structure, interacts with PPP1CA, PPP1CB and PPP1CC/PPP1G.

The protein localises to the nucleus. Regulatory subunit of protein phosphatase 1. The chain is Protein phosphatase 1 regulatory subunit 7 (Ppp1r7) from Rattus norvegicus (Rat).